The primary structure comprises 740 residues: Catalase-peroxidase (740 aa).

The N-terminal stretch at 1 to 27 is a signal peptide; it reads MFKSTLPIAAAISVALTSMVLPAKALA. The segment at residues 106–228 is a cross-link (tryptophyl-tyrosyl-methioninium (Trp-Tyr) (with M-254)); it reads WHSAGVYRVH…LAAVEMGLIY (123 aa). The Proton acceptor role is filled by His107. A cross-link (tryptophyl-tyrosyl-methioninium (Tyr-Met) (with W-106)) is located at residues 228–254; sequence YVNPEGPHGKPDPLLAANDIRMSFGRM. Heme b is bound at residue His269.

The protein belongs to the peroxidase family. Peroxidase/catalase subfamily. Homodimer or homotetramer. Requires heme b as cofactor. Post-translationally, formation of the three residue Trp-Tyr-Met cross-link is important for the catalase, but not the peroxidase activity of the enzyme.

It carries out the reaction H2O2 + AH2 = A + 2 H2O. The catalysed reaction is 2 H2O2 = O2 + 2 H2O. Functionally, bifunctional enzyme with both catalase and broad-spectrum peroxidase activity. The protein is Catalase-peroxidase of Colwellia psychrerythraea (strain 34H / ATCC BAA-681) (Vibrio psychroerythus).